Reading from the N-terminus, the 190-residue chain is Adenine phosphoribosyltransferase (190 aa).

It belongs to the purine/pyrimidine phosphoribosyltransferase family. Homodimer.

The protein resides in the cytoplasm. It carries out the reaction AMP + diphosphate = 5-phospho-alpha-D-ribose 1-diphosphate + adenine. It functions in the pathway purine metabolism; AMP biosynthesis via salvage pathway; AMP from adenine: step 1/1. Functionally, catalyzes a salvage reaction resulting in the formation of AMP, that is energically less costly than de novo synthesis. The sequence is that of Adenine phosphoribosyltransferase from Treponema pallidum (strain Nichols).